The sequence spans 82 residues: Small ribosomal subunit protein bS16 (82 aa).

The protein belongs to the bacterial ribosomal protein bS16 family.

This Blochmanniella floridana protein is Small ribosomal subunit protein bS16.